We begin with the raw amino-acid sequence, 428 residues long: Hydrolase acrC (428 aa).

Residue S248 is part of the active site.

This sequence belongs to the AB hydrolase superfamily. FUS2 hydrolase family.

Its pathway is secondary metabolite biosynthesis. In terms of biological role, hydrolase; part of the cluster that mediates the biosynthesis of acurin A, a highly reduced polyketide coupled to a serine via a peptide bond. The activities of the highly reducing polyketide synthase acrA and the nonribosomal peptide synthetase acrB are collectively responsible for the synthesis of the acurin A core structure with a heptaketide backbone produced by acrA covalently fused to a L-serine by acrB. After the formation of the PK-NRP hybrid product, it is detached from acrB by reductive release to set up the formation of the lactam ring by aldol condensation. The hydrolyase acrC then catalyzes water loss to generate a double bond in the ring. This double bond is probably reduced, which is followed by three oxidations at C-22 to generate the carboxylic acid moiety, involving probably the FAD-binding monooxygenase acrE and the cytochrome P450 monooxygenases acrD and acrF. Finally, a last methylation step performed by the O-methyltransferase acrG leads to the production of acurin A. The sequence is that of Hydrolase acrC from Aspergillus aculeatus (strain ATCC 16872 / CBS 172.66 / WB 5094).